The chain runs to 260 residues: Ribosomal RNA small subunit methyltransferase J (260 aa).

S-adenosyl-L-methionine contacts are provided by residues 101-102, 117-118, 153-154, and D176; these read RD, ER, and SS.

The protein belongs to the methyltransferase superfamily. RsmJ family.

It is found in the cytoplasm. It carries out the reaction guanosine(1516) in 16S rRNA + S-adenosyl-L-methionine = N(2)-methylguanosine(1516) in 16S rRNA + S-adenosyl-L-homocysteine + H(+). Its function is as follows. Specifically methylates the guanosine in position 1516 of 16S rRNA. This chain is Ribosomal RNA small subunit methyltransferase J, found in Aliivibrio salmonicida (strain LFI1238) (Vibrio salmonicida (strain LFI1238)).